A 602-amino-acid polypeptide reads, in one-letter code: Aspartate--tRNA(Asp/Asn) ligase (602 aa).

Residue E176 participates in L-aspartate binding. The segment at 200 to 203 (QQFK) is aspartate. L-aspartate-binding residues include R222 and H452. 222–224 (RDE) lines the ATP pocket. An ATP-binding site is contributed by E490. Position 497 (R497) interacts with L-aspartate. 542–545 (GIDR) is a binding site for ATP.

It belongs to the class-II aminoacyl-tRNA synthetase family. Type 1 subfamily. In terms of assembly, homodimer.

The protein localises to the cytoplasm. It catalyses the reaction tRNA(Asx) + L-aspartate + ATP = L-aspartyl-tRNA(Asx) + AMP + diphosphate. Aspartyl-tRNA synthetase with relaxed tRNA specificity since it is able to aspartylate not only its cognate tRNA(Asp) but also tRNA(Asn). Reaction proceeds in two steps: L-aspartate is first activated by ATP to form Asp-AMP and then transferred to the acceptor end of tRNA(Asp/Asn). The protein is Aspartate--tRNA(Asp/Asn) ligase of Rickettsia conorii (strain ATCC VR-613 / Malish 7).